The sequence spans 352 residues: Biotin synthase (352 aa).

In terms of domain architecture, Radical SAM core spans 44-262 (NRVQVSTLLS…LAVARIMMPK (219 aa)). [4Fe-4S] cluster contacts are provided by C59, C63, and C66. [2Fe-2S] cluster-binding residues include C103, C134, C194, and R266.

It belongs to the radical SAM superfamily. Biotin synthase family. Homodimer. It depends on [4Fe-4S] cluster as a cofactor. Requires [2Fe-2S] cluster as cofactor.

It catalyses the reaction (4R,5S)-dethiobiotin + (sulfur carrier)-SH + 2 reduced [2Fe-2S]-[ferredoxin] + 2 S-adenosyl-L-methionine = (sulfur carrier)-H + biotin + 2 5'-deoxyadenosine + 2 L-methionine + 2 oxidized [2Fe-2S]-[ferredoxin]. It participates in cofactor biosynthesis; biotin biosynthesis; biotin from 7,8-diaminononanoate: step 2/2. Catalyzes the conversion of dethiobiotin (DTB) to biotin by the insertion of a sulfur atom into dethiobiotin via a radical-based mechanism. The sequence is that of Biotin synthase from Ectopseudomonas mendocina (strain ymp) (Pseudomonas mendocina).